The sequence spans 484 residues: Glutamate--tRNA ligase (484 aa).

The 'HIGH' region motif lies at 11–21 (PSPTGLLHIGN). The 'KMSKS' region signature appears at 255–259 (KLSKR). ATP is bound at residue Lys258.

It belongs to the class-I aminoacyl-tRNA synthetase family. Glutamate--tRNA ligase type 1 subfamily. Monomer.

The protein resides in the cytoplasm. The catalysed reaction is tRNA(Glu) + L-glutamate + ATP = L-glutamyl-tRNA(Glu) + AMP + diphosphate. In terms of biological role, catalyzes the attachment of glutamate to tRNA(Glu) in a two-step reaction: glutamate is first activated by ATP to form Glu-AMP and then transferred to the acceptor end of tRNA(Glu). This chain is Glutamate--tRNA ligase, found in Streptococcus suis (strain 98HAH33).